We begin with the raw amino-acid sequence, 71 residues long: Large ribosomal subunit protein bL31 (71 aa).

Zn(2+) is bound by residues C16, C18, C38, and C41.

Belongs to the bacterial ribosomal protein bL31 family. Type A subfamily. As to quaternary structure, part of the 50S ribosomal subunit. It depends on Zn(2+) as a cofactor.

Binds the 23S rRNA. The polypeptide is Large ribosomal subunit protein bL31 (Neisseria meningitidis serogroup A / serotype 4A (strain DSM 15465 / Z2491)).